Here is a 351-residue protein sequence, read N- to C-terminus: Cytoplasmic dynein 2 light intermediate chain 1 (351 aa).

The protein belongs to the dynein light intermediate chain family. As to quaternary structure, light intermediate chain of the cytoplasmic dynein complex 2, a multisubunit complex composed at least of eleven different proteins. The cytoplasmic dynein 2 complex consists of two catalytic heavy chains (HCs) and a number of non-catalytic subunits presented by intermediate chains (ICs), light intermediate chains (LICs) and light chains (LCs). Among them, a heavy chain (DYNC2H1), two intermediate chains (DYNC2I2 and DYNC2I1), a light intermediate chain (DYNC2LI1), and a light chain (DYNLT2B) are unique to the dynein-2 complex, but a subset of light chains are also shared by dynein-1 and dynein-2 complexes. Dynein-2 complex is built around two copies of cytoplasmic dynein 2 heavy chain 1 (DYNC2H1). The C-terminal region of DYNC2H1 forms the motor domain, which converts the energy from ATP hydrolysis into movement. Its N-terminal region forms the tail, an extended structure that binds the other subunits and holds the two heavy chains in a homodimer. Interacts with DYNC2H1 (via N-terminus); this interaction stabilizes the dynein-2 complex structure. In terms of tissue distribution, expressed in bone, brain, kidney, and cartilage. Lower expression in heart, liver, lung, placenta and thymus.

Its subcellular location is the golgi apparatus. It is found in the cytoplasm. The protein resides in the cell projection. The protein localises to the cilium. It localises to the cytoskeleton. Its subcellular location is the cilium basal body. It is found in the cilium axoneme. The protein resides in the microtubule organizing center. The protein localises to the centrosome. Acts as one of several non-catalytic accessory components of the cytoplasmic dynein 2 complex (dynein-2 complex), a motor protein complex that drives the movement of cargos along microtubules within cilia and flagella in concert with the intraflagellar transport (IFT) system, facilitating the assembly of these organelles. Involved in the regulation of ciliary length. The sequence is that of Cytoplasmic dynein 2 light intermediate chain 1 (DYNC2LI1) from Homo sapiens (Human).